The primary structure comprises 577 residues: F-box-like/WD repeat-containing protein TBL1X (577 aa).

The 33-residue stretch at 55–87 (TSDEVNFLVYRYLQESGFSHSAFTFGIESHISQ) folds into the LisH domain. Residues 92 to 137 (GTLVPPAALISILQKGLQYVEAEISINEDGTVFDGRPIESLSLIDA) form the F-box-like domain. Residue K153 is modified to N6-acetyllysine. The interval 177 to 202 (TTSAGVSHQNPSKNREATVNGEENRA) is disordered. A Phosphoserine modification is found at S183. 8 WD repeats span residues 230 to 269 (GHES…NGGS), 286 to 325 (PSNK…ASTL), 327 to 366 (QHKG…AKQQ), 369 to 409 (FHSA…KTFQ), 410 to 449 (GHTN…CIHD), 452 to 500 (AHNK…CTHT), 503 to 542 (KHQE…LVHS), and 544 to 576 (RGTG…LDLR). A Glycyl lysine isopeptide (Lys-Gly) (interchain with G-Cter in SUMO2) cross-link involves residue K340.

The protein belongs to the WD repeat EBI family. Homotetramer; dimer of dimers. Component of the N-Cor repressor complex, at least composed of NCOR1, NCOR2, HDAC3, TBL1X, TBL1R, CORO2A and GPS2. Interacts with GPS2 (when sumoylated); leading to protect GPS2 against degradation by the proteasome. Component of a E3 ubiquitin ligase complex containing UBE2D1, SIAH1, CACYBP/SIP, SKP1, APC and TBL1X. Probably part of other corepressor complexes, that do not contain NCOR1 and NCOR2. Interacts with histones H2B, H3a and H4. Interacts with MECP2; recruits TBL1X to the heterochromatin foci. Interacts with USP44. As to expression, ubiquitous.

Its subcellular location is the nucleus. F-box-like protein involved in the recruitment of the ubiquitin/19S proteasome complex to nuclear receptor-regulated transcription units. Plays an essential role in transcription activation mediated by nuclear receptors. Probably acts as integral component of corepressor complexes that mediates the recruitment of the 19S proteasome complex, leading to the subsequent proteasomal degradation of transcription repressor complexes, thereby allowing cofactor exchange. The polypeptide is F-box-like/WD repeat-containing protein TBL1X (TBL1X) (Homo sapiens (Human)).